A 447-amino-acid polypeptide reads, in one-letter code: Putative vacuolar cation/proton exchanger 4 (447 aa).

The disordered stretch occupies residues 1-29 (MDKSEMDKINGTNPESTDQAPSLASRPDE). Residues 1–65 (MDKSEMDKIN…VNWGVFGSMK (65 aa)) lie on the Cytoplasmic side of the membrane. Residues 10–22 (NGTNPESTDQAPS) show a composition bias toward polar residues. A helical transmembrane segment spans residues 66–86 (IVFLKSKLNVLIPCGFLAIFL). At 87-93 (NYMTQRY) the chain is on the extracellular side. Residues 94-114 (GWVFPLSMLGIIPLAERLGFA) traverse the membrane as a helical segment. The Cytoplasmic portion of the chain corresponds to 115–122 (TDWQISCE). Residues 123–143 (VGRLLNSAFGNATELIISIHA) traverse the membrane as a helical segment. The interval 132–167 (GNATELIISIHALSRGKLHVVQQCLLGSILSNLLLV) is cation selection. At 144–159 (LSRGKLHVVQQCLLGS) the chain is on the extracellular side. The helical transmembrane segment at 160-180 (ILSNLLLVLGSAFFSGGLACG) threads the bilayer. Residues 181–190 (KTMQTFSKAD) lie on the Cytoplasmic side of the membrane. Residues 191–211 (AVVNSGLLLMAVMGLLIPAAL) form a helical membrane-spanning segment. The Extracellular segment spans residues 212–224 (HYTHSEAQFGKSE). The chain crosses the membrane as a helical span at residues 225 to 245 (LALSRFSSCIMLVAYASYLYF). The Cytoplasmic segment spans residues 246–286 (QLSNNRRRNEANVYPCMPLIKRRIQDDVDGNDDEVPEISKR). Residues 287–307 (EAISWIAIFIAWISMLSYYLV) form a helical membrane-spanning segment. Topologically, residues 308 to 318 (DAIDGASKAWN) are extracellular. Residues 319–339 (IPVAFISVVLLPVVGNSAGHA) traverse the membrane as a helical segment. A cation selection region spans residues 333-368 (GNSAGHANAVMFAVKDKLDISLGVAIGSSIQISMFG). Topologically, residues 340 to 353 (NAVMFAVKDKLDIS) are cytoplasmic. Residues 354–374 (LGVAIGSSIQISMFGIPFCVV) traverse the membrane as a helical segment. At 375-384 (MGWMMGKPMD) the chain is on the extracellular side. The chain crosses the membrane as a helical span at residues 385–405 (LNFHLFETASLLTTVLVVAFL). Residues 406-413 (LQDGTSNC) lie on the Cytoplasmic side of the membrane. Residues 414–434 (VKGLMLFLCYLIVAASFYVHA) form a helical membrane-spanning segment. Residues 435-447 (DPNSKASEKPPQN) lie on the Extracellular side of the membrane.

It belongs to the Ca(2+):cation antiporter (CaCA) (TC 2.A.19) family. Cation/proton exchanger (CAX) subfamily.

The protein resides in the vacuole membrane. In terms of biological role, vacuolar cation/proton exchanger (CAX). Translocates Ca(2+) and other metal ions into vacuoles using the proton gradient formed by H(+)-ATPase and H(+)-pyrophosphatase. This Oryza sativa subsp. japonica (Rice) protein is Putative vacuolar cation/proton exchanger 4.